Reading from the N-terminus, the 131-residue chain is Small ribosomal subunit protein uS8 (131 aa).

It belongs to the universal ribosomal protein uS8 family. As to quaternary structure, part of the 30S ribosomal subunit. Contacts proteins S5 and S12.

In terms of biological role, one of the primary rRNA binding proteins, it binds directly to 16S rRNA central domain where it helps coordinate assembly of the platform of the 30S subunit. The sequence is that of Small ribosomal subunit protein uS8 from Ralstonia pickettii (strain 12J).